The chain runs to 107 residues: Polyketide synthase CurG (107 aa).

It participates in antibiotic biosynthesis; curamycin biosynthesis. This Streptomyces cyaneus (Streptomyces curacoi) protein is Polyketide synthase CurG (curG).